Here is a 1169-residue protein sequence, read N- to C-terminus: DNA-directed RNA polymerase subunit beta (1169 aa).

It belongs to the RNA polymerase beta chain family. The RNAP catalytic core consists of 2 alpha, 1 beta, 1 beta' and 1 omega subunit. When a sigma factor is associated with the core the holoenzyme is formed, which can initiate transcription. Interacts with RbpA, which partially restores Rif-inhibited transcription.

It catalyses the reaction RNA(n) + a ribonucleoside 5'-triphosphate = RNA(n+1) + diphosphate. Functionally, DNA-dependent RNA polymerase catalyzes the transcription of DNA into RNA using the four ribonucleoside triphosphates as substrates. This subunit often mutates to generate rifampicin (Rif) resistance. Interaction with RbpA partially restores Rif-inhibited transcription; once the subunit is Rif-resistant however RbpA no longer stimulates transcription. The protein is DNA-directed RNA polymerase subunit beta of Mycolicibacterium smegmatis (strain ATCC 700084 / mc(2)155) (Mycobacterium smegmatis).